The primary structure comprises 312 residues: Ribonuclease Z (312 aa).

7 residues coordinate Zn(2+): H62, H64, D66, H67, H139, D210, and H268. D66 (proton acceptor) is an active-site residue.

This sequence belongs to the RNase Z family. As to quaternary structure, homodimer. Zn(2+) serves as cofactor.

It catalyses the reaction Endonucleolytic cleavage of RNA, removing extra 3' nucleotides from tRNA precursor, generating 3' termini of tRNAs. A 3'-hydroxy group is left at the tRNA terminus and a 5'-phosphoryl group is left at the trailer molecule.. Zinc phosphodiesterase, which displays some tRNA 3'-processing endonuclease activity. Probably involved in tRNA maturation, by removing a 3'-trailer from precursor tRNA. This chain is Ribonuclease Z, found in Crocosphaera subtropica (strain ATCC 51142 / BH68) (Cyanothece sp. (strain ATCC 51142)).